Reading from the N-terminus, the 251-residue chain is 3-deoxy-manno-octulosonate cytidylyltransferase (251 aa).

The protein belongs to the KdsB family.

Its subcellular location is the cytoplasm. It catalyses the reaction 3-deoxy-alpha-D-manno-oct-2-ulosonate + CTP = CMP-3-deoxy-beta-D-manno-octulosonate + diphosphate. It participates in nucleotide-sugar biosynthesis; CMP-3-deoxy-D-manno-octulosonate biosynthesis; CMP-3-deoxy-D-manno-octulosonate from 3-deoxy-D-manno-octulosonate and CTP: step 1/1. The protein operates within bacterial outer membrane biogenesis; lipopolysaccharide biosynthesis. In terms of biological role, activates KDO (a required 8-carbon sugar) for incorporation into bacterial lipopolysaccharide in Gram-negative bacteria. This is 3-deoxy-manno-octulosonate cytidylyltransferase from Chlorobium luteolum (strain DSM 273 / BCRC 81028 / 2530) (Pelodictyon luteolum).